Here is a 493-residue protein sequence, read N- to C-terminus: Galactose-1-phosphate uridylyltransferase (493 aa).

It belongs to the galactose-1-phosphate uridylyltransferase type 2 family.

It is found in the cytoplasm. The enzyme catalyses alpha-D-galactose 1-phosphate + UDP-alpha-D-glucose = alpha-D-glucose 1-phosphate + UDP-alpha-D-galactose. It participates in carbohydrate metabolism; galactose metabolism. The chain is Galactose-1-phosphate uridylyltransferase from Lactococcus lactis subsp. cremoris (strain SK11).